A 597-amino-acid chain; its full sequence is Probable translation initiation factor IF-2 (597 aa).

One can recognise a tr-type G domain in the interval 13–229 (LRTPIVCVMG…LLGLAQKFLE (217 aa)). Positions 22-29 (GHVDHGKT) are G1. 22-29 (GHVDHGKT) provides a ligand contact to GTP. Positions 47–51 (AITQH) are G2. Positions 84 to 87 (DTPG) are G3. Residues 84-88 (DTPGH) and 138-141 (NKID) contribute to the GTP site. Residues 138 to 141 (NKID) are G4. A G5 region spans residues 206–208 (SAV).

Belongs to the TRAFAC class translation factor GTPase superfamily. Classic translation factor GTPase family. IF-2 subfamily.

Functionally, function in general translation initiation by promoting the binding of the formylmethionine-tRNA to ribosomes. Seems to function along with eIF-2. The chain is Probable translation initiation factor IF-2 from Methanosarcina acetivorans (strain ATCC 35395 / DSM 2834 / JCM 12185 / C2A).